A 695-amino-acid polypeptide reads, in one-letter code: Putative ATP-dependent RNA helicase L540 (695 aa).

Residues 53 to 219 (LSALENYQLV…FNSVDSTVID (167 aa)) form the Helicase ATP-binding domain. Position 66–73 (66–73 (SSTGSGKS)) interacts with ATP. The DEAH box signature appears at 164–167 (DEAH). Residues 247-434 (LIEDLIHQQI…GINMMNQLMD (188 aa)) enclose the Helicase C-terminal domain.

The protein belongs to the DEAD box helicase family. DEAH subfamily.

Its subcellular location is the virion. It carries out the reaction ATP + H2O = ADP + phosphate + H(+). This chain is Putative ATP-dependent RNA helicase L540, found in Acanthamoeba polyphaga (Amoeba).